We begin with the raw amino-acid sequence, 642 residues long: Threonine--tRNA ligase (642 aa).

The TGS domain maps to 1–61 (MPVITLPDGS…ESDAQLAIIT (61 aa)). The tract at residues 243–534 (DHRKIGKQLD…LTEEYAGFFP (292 aa)) is catalytic. 3 residues coordinate Zn(2+): Cys334, His385, and His511.

This sequence belongs to the class-II aminoacyl-tRNA synthetase family. As to quaternary structure, homodimer. The cofactor is Zn(2+).

It is found in the cytoplasm. It catalyses the reaction tRNA(Thr) + L-threonine + ATP = L-threonyl-tRNA(Thr) + AMP + diphosphate + H(+). Its function is as follows. Catalyzes the attachment of threonine to tRNA(Thr) in a two-step reaction: L-threonine is first activated by ATP to form Thr-AMP and then transferred to the acceptor end of tRNA(Thr). Also edits incorrectly charged L-seryl-tRNA(Thr). The chain is Threonine--tRNA ligase from Yersinia pseudotuberculosis serotype O:1b (strain IP 31758).